A 428-amino-acid chain; its full sequence is Arginine biosynthesis bifunctional protein ArgJ, mitochondrial (428 aa).

Substrate-binding residues include Thr-171, Lys-197, Thr-208, Glu-294, Asn-423, and Ser-428. Thr-208 functions as the Nucleophile in the catalytic mechanism.

The protein belongs to the ArgJ family. As to quaternary structure, heterodimer of an alpha and a beta chain. Post-translationally, the alpha and beta chains are autoproteolytically processed from a single precursor protein within the mitochondrion.

It is found in the mitochondrion matrix. The enzyme catalyses N(2)-acetyl-L-ornithine + L-glutamate = N-acetyl-L-glutamate + L-ornithine. It carries out the reaction L-glutamate + acetyl-CoA = N-acetyl-L-glutamate + CoA + H(+). It functions in the pathway amino-acid biosynthesis; L-arginine biosynthesis; L-ornithine and N-acetyl-L-glutamate from L-glutamate and N(2)-acetyl-L-ornithine (cyclic): step 1/1. Its pathway is amino-acid biosynthesis; L-arginine biosynthesis; N(2)-acetyl-L-ornithine from L-glutamate: step 1/4. Catalyzes two activities which are involved in the cyclic version of arginine biosynthesis: the synthesis of acetylglutamate from glutamate and acetyl-CoA, and of ornithine by transacetylation between acetylornithine and glutamate. The polypeptide is Arginine biosynthesis bifunctional protein ArgJ, mitochondrial (Komagataella phaffii (strain GS115 / ATCC 20864) (Yeast)).